Consider the following 21-residue polypeptide: Major outer membrane protein (21 aa).

As to quaternary structure, disulfide bond interactions within and between MOMP molecules and other components form high molecular-weight oligomers.

The protein localises to the cell outer membrane. Structural rigidity of the outer membrane of elementary bodies and porin forming, permitting diffusion of solutes through the intracellular reticulate body membrane. The polypeptide is Major outer membrane protein (Actinobacillus equuli).